Reading from the N-terminus, the 106-residue chain is Integration host factor subunit alpha (106 aa).

It belongs to the bacterial histone-like protein family. As to quaternary structure, heterodimer of an alpha and a beta chain.

This protein is one of the two subunits of integration host factor, a specific DNA-binding protein that functions in genetic recombination as well as in transcriptional and translational control. The protein is Integration host factor subunit alpha of Paramagnetospirillum magneticum (strain ATCC 700264 / AMB-1) (Magnetospirillum magneticum).